The following is a 97-amino-acid chain: Mapk-regulated corepressor-interacting protein 1 (97 aa).

A disordered region spans residues 1–29 (MTSSPVSRVVYNGKRNSSPRSPTNSSEIF). Over residues 15-26 (RNSSPRSPTNSS) the composition is skewed to low complexity. Phosphoserine is present on S21. T30 is subject to Phosphothreonine. Residue Y41 is modified to Phosphotyrosine. Residue K79 is modified to N6-acetyllysine. Residues 80–84 (PIDLS) carry the PXDLS motif motif.

It belongs to the MCRIP family. In terms of assembly, interacts (unphosphorylated form, via the PXDLS motif) with CTBP1, competitively inhibiting CTBP-ZEB1 interaction. Interacts with CTBP2. Interacts with MCRIP2. Interacts with DDX6. Phosphorylation by MAPK3/1 (ERK1/2) regulates MCRIP1 binding to CTBP(s). Widely expressed (at protein level).

The protein resides in the nucleus. It localises to the cytoplasm. It is found in the stress granule. Its function is as follows. The phosphorylation status of MCRIP1 functions as a molecular switch to regulate epithelial-mesenchymal transition. Unphosphorylated MCRIP1 binds to and inhibits the transcriptional corepressor CTBP(s). When phosphorylated by MAPK/ERK, MCRIP1 releases CTBP(s) resulting in transcriptional silencing of the E-cadherin gene and induction of epithelial-mesenchymal transition. This chain is Mapk-regulated corepressor-interacting protein 1 (Mcrip1), found in Mus musculus (Mouse).